Here is a 102-residue protein sequence, read N- to C-terminus: Large ribosomal subunit protein uL24 (102 aa).

It belongs to the universal ribosomal protein uL24 family. Part of the 50S ribosomal subunit.

One of two assembly initiator proteins, it binds directly to the 5'-end of the 23S rRNA, where it nucleates assembly of the 50S subunit. Its function is as follows. One of the proteins that surrounds the polypeptide exit tunnel on the outside of the subunit. The polypeptide is Large ribosomal subunit protein uL24 (Lysinibacillus sphaericus (strain C3-41)).